A 396-amino-acid chain; its full sequence is Elongation factor Tu (396 aa).

The 196-residue stretch at 10–205 (KPHVNIGTIG…ACDDSIPDPE (196 aa)) folds into the tr-type G domain. Residues 19-26 (GHVDHGKT) are G1. 19-26 (GHVDHGKT) contributes to the GTP binding site. Threonine 26 is a binding site for Mg(2+). The tract at residues 62–66 (GITIN) is G2. The tract at residues 83–86 (DAPG) is G3. GTP contacts are provided by residues 83 to 87 (DAPGH) and 138 to 141 (NKCD). The segment at 138-141 (NKCD) is G4. Residues 175 to 177 (SAL) are G5.

This sequence belongs to the TRAFAC class translation factor GTPase superfamily. Classic translation factor GTPase family. EF-Tu/EF-1A subfamily. In terms of assembly, monomer.

The protein resides in the cytoplasm. It carries out the reaction GTP + H2O = GDP + phosphate + H(+). Functionally, GTP hydrolase that promotes the GTP-dependent binding of aminoacyl-tRNA to the A-site of ribosomes during protein biosynthesis. The protein is Elongation factor Tu of Corynebacterium aurimucosum (strain ATCC 700975 / DSM 44827 / CIP 107346 / CN-1) (Corynebacterium nigricans).